A 1025-amino-acid chain; its full sequence is Multidrug resistance protein MdtC (1025 aa).

12 helical membrane passes run 3-23, 333-353, 360-380, 387-407, 431-451, 463-483, 528-548, 853-873, 875-895, 897-917, 953-973, and 984-1004; these read FFALFIYRPVATILLSVAITL, EVEQTLIISVALVILVVFLFL, IIPAVSVPVSLIGTFAAMYLC, LSLMALTIATGFVVDDAIVVL, VGFTVLSMSLSLVAVFLPLLL, FAVTLSVAIGISLLVSLTLTP, LVGVVLLGTIALNIWLYISIP, VILIIAAIATVYIVLGILYES, VHPLTILSTLPSAGVGALLAL, LFNAPFSLIALIGIMLLIGIV, PIMMTTLAALFGALPLVLSGG, and ITIVGGLVMSQLLTLYTTPVV.

The protein belongs to the resistance-nodulation-cell division (RND) (TC 2.A.6) family. MdtC subfamily. As to quaternary structure, part of a tripartite efflux system composed of MdtA, MdtB and MdtC. MdtC forms a heteromultimer with MdtB.

The protein resides in the cell inner membrane. Its function is as follows. The MdtABC tripartite complex confers resistance against novobiocin and deoxycholate. This is Multidrug resistance protein MdtC from Escherichia coli (strain ATCC 8739 / DSM 1576 / NBRC 3972 / NCIMB 8545 / WDCM 00012 / Crooks).